Consider the following 320-residue polypeptide: Lipoyl synthase (320 aa).

Residues 1–29 are disordered; sequence MVTVVDRVTNRRLRHPEKAHRPDTSVQKK. Positions 19-29 are enriched in basic and acidic residues; the sequence is AHRPDTSVQKK. [4Fe-4S] cluster contacts are provided by cysteine 59, cysteine 64, cysteine 70, cysteine 85, cysteine 89, cysteine 92, and serine 298. One can recognise a Radical SAM core domain in the interval 71 to 287; it reads WSQRHASFMI…AKIGKVKGFL (217 aa).

The protein belongs to the radical SAM superfamily. Lipoyl synthase family. [4Fe-4S] cluster serves as cofactor.

The protein resides in the cytoplasm. The catalysed reaction is [[Fe-S] cluster scaffold protein carrying a second [4Fe-4S](2+) cluster] + N(6)-octanoyl-L-lysyl-[protein] + 2 oxidized [2Fe-2S]-[ferredoxin] + 2 S-adenosyl-L-methionine + 4 H(+) = [[Fe-S] cluster scaffold protein] + N(6)-[(R)-dihydrolipoyl]-L-lysyl-[protein] + 4 Fe(3+) + 2 hydrogen sulfide + 2 5'-deoxyadenosine + 2 L-methionine + 2 reduced [2Fe-2S]-[ferredoxin]. Its pathway is protein modification; protein lipoylation via endogenous pathway; protein N(6)-(lipoyl)lysine from octanoyl-[acyl-carrier-protein]: step 2/2. Functionally, catalyzes the radical-mediated insertion of two sulfur atoms into the C-6 and C-8 positions of the octanoyl moiety bound to the lipoyl domains of lipoate-dependent enzymes, thereby converting the octanoylated domains into lipoylated derivatives. This chain is Lipoyl synthase, found in Bartonella tribocorum (strain CIP 105476 / IBS 506).